Reading from the N-terminus, the 41-residue chain is uncharacterized protein (41 aa).

Residues 1 to 23 (MNFLMRAIFSLLLLFTLSIPVIS) form the signal peptide.

This is an uncharacterized protein from Escherichia coli (strain K12).